Consider the following 268-residue polypeptide: MAEKSFDNWKKIVVKVGTSTIVQENSQINLPIIGQLVQTLCALRNQNREVVFVTSGAVGVAINQLGFKERPNEIPRQQALAAIGQADLMAIYNQNFSFYHQITGQILLTYDVFDNPKMLENMLNALRELLKMKAIPIINENDVIAVDEMDHQHSFGDNDCLAAMVTKIIDADGLIILSDVDALYDRNPHEFANAKAIKRVGSITKQVINLASGKSNLGKGGMLTKLKAAKYLLKNDKQMLLLPGSEPDGILKALSGQEIGTLFANEYK.

Lysine 15 is an ATP binding site. Residues serine 55, aspartate 142, and asparagine 158 each coordinate substrate. 178 to 179 (SD) contributes to the ATP binding site.

Belongs to the glutamate 5-kinase family.

The protein localises to the cytoplasm. It carries out the reaction L-glutamate + ATP = L-glutamyl 5-phosphate + ADP. Its pathway is amino-acid biosynthesis; L-proline biosynthesis; L-glutamate 5-semialdehyde from L-glutamate: step 1/2. Catalyzes the transfer of a phosphate group to glutamate to form L-glutamate 5-phosphate. The sequence is that of Glutamate 5-kinase from Oenococcus oeni (strain ATCC BAA-331 / PSU-1).